The chain runs to 590 residues: Cell division protein FtsZ 1 (590 aa).

GTP-binding positions include 24–28 (GGGGN), 111–113 (GTG), Glu142, Arg146, and Asp190. Disordered regions lie at residues 346 to 372 (AAVPAQPQPTVSLQPVPQPQPVQQPLQ) and 524 to 590 (EATN…RQSS). Residues 534-546 (AAAPSAASQQRRP) are compositionally biased toward low complexity. Positions 559–576 (GQLDDHGRAAPQMRSHED) are enriched in basic and acidic residues.

It belongs to the FtsZ family. As to quaternary structure, homodimer. Polymerizes to form a dynamic ring structure in a strictly GTP-dependent manner. Interacts directly with several other division proteins.

It is found in the cytoplasm. In terms of biological role, essential cell division protein that forms a contractile ring structure (Z ring) at the future cell division site. The regulation of the ring assembly controls the timing and the location of cell division. One of the functions of the FtsZ ring is to recruit other cell division proteins to the septum to produce a new cell wall between the dividing cells. Binds GTP and shows GTPase activity. The protein is Cell division protein FtsZ 1 of Rhizobium meliloti (strain 1021) (Ensifer meliloti).